The primary structure comprises 157 residues: Cyclic pyranopterin monophosphate synthase (157 aa).

Substrate contacts are provided by residues 74–76 (MCH) and 111–112 (ME). Asp126 is an active-site residue.

This sequence belongs to the MoaC family. As to quaternary structure, homohexamer; trimer of dimers.

It catalyses the reaction (8S)-3',8-cyclo-7,8-dihydroguanosine 5'-triphosphate = cyclic pyranopterin phosphate + diphosphate. The protein operates within cofactor biosynthesis; molybdopterin biosynthesis. Functionally, catalyzes the conversion of (8S)-3',8-cyclo-7,8-dihydroguanosine 5'-triphosphate to cyclic pyranopterin monophosphate (cPMP). In Carboxydothermus hydrogenoformans (strain ATCC BAA-161 / DSM 6008 / Z-2901), this protein is Cyclic pyranopterin monophosphate synthase.